We begin with the raw amino-acid sequence, 356 residues long: Protein HEXIM1 (356 aa).

Basic and acidic residues-rich tracts occupy residues 1–11 and 24–47; these read MAEPLLSEHQH and VHEEQNSERPPSAEERVPKEDSRW. The segment at 1–160 is disordered; sequence MAEPLLSEHQ…RRRPSKKKRH (160 aa). Residues 48 to 58 are compositionally biased toward polar residues; that stretch reads QSRASLQSGSR. Residues 84–93 show a composition bias toward basic and acidic residues; sequence CLEKGEKGQN. A phosphoserine mark is found at Ser-98 and Ser-103. The span at 145–160 shows a compositional bias: basic residues; that stretch reads LGKKKHRRRPSKKKRH. The segment at 147 to 174 is basic region; mediates nuclear localization and interaction with 7SK snRNA and NR3C1; the sequence is KKKHRRRPSKKKRHWKPYYKLTWEEKKK. The interaction with P-TEFb stretch occupies residues 199–202; sequence PYNT. Residues 207 to 247 form an autoinhibitory acidic region; in absence of 7SK snRNA interacts with the basic region preventing interaction with P-TEFb and modulating subcellular localization region; that stretch reads MDDHDQEEPDLKTGLYPKRAAAKSDDTSDEDFVEEAGEEDG. Positions 209-259 are disordered; the sequence is DHDQEEPDLKTGLYPKRAAAKSDDTSDEDFVEEAGEEDGGSDGMGGDGSEF. Ser-230 is modified (phosphoserine). Thr-233 is subject to Phosphothreonine. Over residues 233-248 the composition is skewed to acidic residues; that stretch reads TSDEDFVEEAGEEDGG. A phosphoserine mark is found at Ser-234, Ser-249, and Ser-257. Residues 280–346 adopt a coiled-coil conformation; it reads SKQELIKEYL…LTENELHRQQ (67 aa). The interval 283-311 is mediates interaction with CCNT1; the sequence is ELIKEYLELEKCLSRKEDENNRLRLESKR. The segment at 307–352 is required for inhibition of ESR1-dependent transcription; it reads LESKRLGGVDARVRELELELDRLRAENRQLLTENELHRQQERAPPS. The tract at residues 337–356 is disordered; sequence LTENELHRQQERAPPSKFGD.

This sequence belongs to the HEXIM family. As to quaternary structure, homooligomer and heterooligomer with HEXIM2; probably dimeric. Core component of the 7SK RNP complex, at least composed of 7SK RNA, LARP7, MEPCE, HEXIM1 (or HEXIM2) and P-TEFb (composed of CDK9 and CCNT1/cyclin-T1). Interacts with the N-CoR complex through NCOR1. Interacts with ESR1 and NR3C1. May interact with NF-kappa-B through RELA. Interacts with CCNT2; mediates formation of a tripartite complex with KPNA2. Part of the HDP-RNP complex composed of at least HEXIM1, PRKDC, XRCC5, XRCC6, paraspeckle proteins (SFPQ, NONO, PSPC1, RBM14, and MATR3) and NEAT1 non-coding RNA.

It is found in the nucleus. It localises to the cytoplasm. Its function is as follows. Transcriptional regulator which functions as a general RNA polymerase II transcription inhibitor. Core component of the 7SK RNP complex: in cooperation with 7SK snRNA sequesters P-TEFb in a large inactive 7SK snRNP complex preventing RNA polymerase II phosphorylation and subsequent transcriptional elongation. May also regulate NF-kappa-B, ESR1, NR3C1 and CIITA-dependent transcriptional activity. Plays a role in the regulation of DNA virus-mediated innate immune response by assembling into the HDP-RNP complex, a complex that serves as a platform for IRF3 phosphorylation and subsequent innate immune response activation through the cGAS-STING pathway. The protein is Protein HEXIM1 (Hexim1) of Rattus norvegicus (Rat).